The sequence spans 187 residues: Peptide deformylase (187 aa).

2 residues coordinate Fe cation: Cys114 and His157. Glu158 is a catalytic residue. Residue His161 coordinates Fe cation.

Belongs to the polypeptide deformylase family. Requires Fe(2+) as cofactor.

The catalysed reaction is N-terminal N-formyl-L-methionyl-[peptide] + H2O = N-terminal L-methionyl-[peptide] + formate. Its function is as follows. Removes the formyl group from the N-terminal Met of newly synthesized proteins. Requires at least a dipeptide for an efficient rate of reaction. N-terminal L-methionine is a prerequisite for activity but the enzyme has broad specificity at other positions. The chain is Peptide deformylase from Enterococcus faecalis (strain ATCC 700802 / V583).